The chain runs to 235 residues: BPI fold-containing family A member 2 (235 aa).

The signal sequence occupies residues 1–20; it reads MFQLGSLVVLCGLLIGTSES. C161 and C204 are oxidised to a cystine.

It belongs to the BPI/LBP/Plunc superfamily. Plunc family. Expressed in parotid, submandibular and sublingual glands.

It is found in the secreted. Functionally, has strong antibacterial activity against P.aeruginosa. The sequence is that of BPI fold-containing family A member 2 (Bpifa2) from Rattus norvegicus (Rat).